We begin with the raw amino-acid sequence, 409 residues long: Histone deacetylase 7 (409 aa).

The tract at residues 11–324 is histone deacetylase; it reads RVSYFYEPMI…WCYETAIAVG (314 aa). Residue histidine 148 is the Proton donor/acceptor of the active site. Aspartate 267 lines the Zn(2+) pocket. Residues 383–409 form a disordered region; sequence PFQDTPSSSQATEAAEVDMEKRNDPRI. Polar residues predominate over residues 384 to 394; the sequence is FQDTPSSSQAT. The segment covering 400–409 has biased composition (basic and acidic residues); sequence DMEKRNDPRI.

This sequence belongs to the histone deacetylase family. HD type 1 subfamily. The cofactor is Zn(2+). Low expression in flowers.

It is found in the nucleus. It catalyses the reaction N(6)-acetyl-L-lysyl-[histone] + H2O = L-lysyl-[histone] + acetate. Responsible for the deacetylation of lysine residues on the N-terminal part of the core histones (H2A, H2B, H3 and H4). Histone deacetylation gives a tag for epigenetic repression and plays an important role in transcriptional regulation, cell cycle progression and developmental events. May be involved in flowering induction. Histone deacetylases act via the formation of large multiprotein complexes. The chain is Histone deacetylase 7 (HDA7) from Arabidopsis thaliana (Mouse-ear cress).